The primary structure comprises 110 residues: Nucleotide-binding protein in fmt 3'region (110 aa).

ATP is bound at residue 8–15 (GLSGAGKT). 57 to 60 (DARA) serves as a coordination point for GTP.

Belongs to the RapZ-like family.

Its function is as follows. Displays ATPase and GTPase activities. This chain is Nucleotide-binding protein in fmt 3'region, found in Thermus thermophilus.